Here is a 73-residue protein sequence, read N- to C-terminus: Small ribosomal subunit protein eS27 (73 aa).

Positions 28, 31, 47, and 50 each coordinate Zn(2+). A C4-type zinc finger spans residues 28 to 50; that stretch reads CPKCGNRQVVFSHSTFRARCLNC.

Belongs to the eukaryotic ribosomal protein eS27 family. As to quaternary structure, part of the 30S ribosomal subunit. The cofactor is Zn(2+).

The polypeptide is Small ribosomal subunit protein eS27 (Aeropyrum pernix (strain ATCC 700893 / DSM 11879 / JCM 9820 / NBRC 100138 / K1)).